The chain runs to 247 residues: Small ribosomal subunit protein uS2 (247 aa).

The protein belongs to the universal ribosomal protein uS2 family.

The chain is Small ribosomal subunit protein uS2 from Cupriavidus pinatubonensis (strain JMP 134 / LMG 1197) (Cupriavidus necator (strain JMP 134)).